Reading from the N-terminus, the 476-residue chain is Lactate utilization protein B (476 aa).

4Fe-4S ferredoxin-type domains follow at residues 304–334 (GTEFQSVLQCIRCAACINVCPVYRHVGGHSY) and 353–382 (YDEYKELPYASSLCAACTEACPVKIPLHEL). Residues Cys-313, Cys-316, Cys-319, Cys-323, Cys-366, Cys-369, and Cys-373 each contribute to the [4Fe-4S] cluster site.

Belongs to the LutB/YkgF family.

Is involved in L-lactate degradation and allows cells to grow with lactate as the sole carbon source. Has probably a role as an electron transporter during oxidation of L-lactate. The sequence is that of Lactate utilization protein B from Bacillus velezensis (strain DSM 23117 / BGSC 10A6 / LMG 26770 / FZB42) (Bacillus amyloliquefaciens subsp. plantarum).